The chain runs to 532 residues: Fatty-acid amide hydrolase 2-A (532 aa).

Residues phenylalanine 9–alanine 29 traverse the membrane as a helical segment. Catalysis depends on charge relay system residues lysine 129 and serine 204. Catalysis depends on serine 228, which acts as the Acyl-ester intermediate.

This sequence belongs to the amidase family.

Its subcellular location is the membrane. It catalyses the reaction N-(5Z,8Z,11Z,14Z-eicosatetraenoyl)-ethanolamine + H2O = ethanolamine + (5Z,8Z,11Z,14Z)-eicosatetraenoate. It carries out the reaction (9Z)-octadecenamide + H2O = (9Z)-octadecenoate + NH4(+). In Danio rerio (Zebrafish), this protein is Fatty-acid amide hydrolase 2-A (faah2a).